Consider the following 588-residue polypeptide: 2-isopropylmalate synthase (588 aa).

The region spanning 40–314 (PRWCAVDLRD…DPQIDFSDLD (275 aa)) is the Pyruvate carboxyltransferase domain. Mg(2+) is bound by residues Asp49, His253, His255, and Asn289. A regulatory domain region spans residues 456-588 (APLDRVEEKW…TVREPELAAV (133 aa)).

Belongs to the alpha-IPM synthase/homocitrate synthase family. LeuA type 2 subfamily. In terms of assembly, homodimer. It depends on Mg(2+) as a cofactor.

It is found in the cytoplasm. It catalyses the reaction 3-methyl-2-oxobutanoate + acetyl-CoA + H2O = (2S)-2-isopropylmalate + CoA + H(+). The protein operates within amino-acid biosynthesis; L-leucine biosynthesis; L-leucine from 3-methyl-2-oxobutanoate: step 1/4. Catalyzes the condensation of the acetyl group of acetyl-CoA with 3-methyl-2-oxobutanoate (2-ketoisovalerate) to form 3-carboxy-3-hydroxy-4-methylpentanoate (2-isopropylmalate). The polypeptide is 2-isopropylmalate synthase (Clavibacter michiganensis subsp. michiganensis (strain NCPPB 382)).